The sequence spans 297 residues: UBX domain-containing protein 1 (297 aa).

At Ala2 the chain carries N-acetylalanine. One can recognise a UBA domain in the interval 2–42; sequence AELTALESLIEMGFPRGRAEKALALTGNQGIEAAMDWLMEH. The tract at residues 38–214 is disordered; that stretch reads WLMEHEDDPD…PPTKREYDQC (177 aa). A compositionally biased stretch (acidic residues) spans 42 to 52; that stretch reads HEDDPDVDEPL. The segment at 43-297 is interaction with BRCA1; it reads EDDPDVDEPL…VLIVAKKCPS (255 aa). Composition is skewed to basic and acidic residues over residues 86–122 and 137–177; these read LTEEERQEQTKRMLELVAQKQREREEREEREALEREK and KLQE…ERAK. Phosphoserine is present on Ser199. Ser200 is subject to Phosphoserine; by MAPK12. 2 positions are modified to phosphothreonine: Thr207 and Thr229. One can recognise a UBX domain in the interval 209–291; the sequence is REYDQCRIQV…GLVPSAVLIV (83 aa). A Phosphoserine modification is found at Ser270.

In terms of assembly, interacts with MAVS; this interaction prevents MAVS oligomerization and thus disrupts the RLR signaling pathway. Interacts with CUL1; this interaction inhibits CUL1-mediated degradation of NF-kappa-B inhibitors. Interacts with BIRC2/c-IAP1; this interaction prevents TNFalpha-stimulated RIP1 ubiquitination and subsequent NF-kappa-B activation. Component of a complex required to couple retrotranslocation, ubiquitination and deglycosylation composed of NGLY1, SAKS1, AMFR, VCP and RAD23B. Interacts with HOMER2. Interacts directly with VCP. Interacts with BRCA1 and BARD1; interaction takes place when BRCA1 is not autoubiquitinated but is strongly enhanced in the presence of autoubiquitinated BRCA1.

It localises to the cytoplasm. Functionally, ubiquitin-binding protein that plays a role in the modulation of innate immune response. Blocks both the RIG-I-like receptors (RLR) and NF-kappa-B pathways. Following viral infection, UBXN1 is induced and recruited to the RLR component MAVS. In turn, interferes with MAVS oligomerization, and disrupts the MAVS/TRAF3/TRAF6 signalosome. This function probably serves as a brake to prevent excessive RLR signaling. Interferes with the TNFalpha-triggered NF-kappa-B pathway by interacting with cellular inhibitors of apoptosis proteins (cIAPs) and thereby inhibiting their recruitment to TNFR1. Also prevents the activation of NF-kappa-B by associating with CUL1 and thus inhibiting NF-kappa-B inhibitor alpha/NFKBIA degradation that remains bound to NF-kappa-B. Interacts with the BRCA1-BARD1 heterodimer and regulates its activity. Specifically binds 'Lys-6'-linked polyubiquitin chains. Interaction with autoubiquitinated BRCA1 leads to the inhibition of the E3 ubiquitin-protein ligase activity of the BRCA1-BARD1 heterodimer. Component of a complex required to couple deglycosylation and proteasome-mediated degradation of misfolded proteins in the endoplasmic reticulum that are retrotranslocated in the cytosol. This is UBX domain-containing protein 1 (Ubxn1) from Mus musculus (Mouse).